Reading from the N-terminus, the 338-residue chain is tRNA (cytidine(56)-2'-O)-methyltransferase (338 aa).

S-adenosyl-L-methionine contacts are provided by residues L79 and 105 to 109; that span reads GSEKV. Positions 188–295 constitute an HD domain; it reads LINHVKSVKE…VAHADNLFAG (108 aa).

This sequence belongs to the aTrm56 family. As to quaternary structure, homodimer.

The protein localises to the cytoplasm. The catalysed reaction is cytidine(56) in tRNA + S-adenosyl-L-methionine = 2'-O-methylcytidine(56) in tRNA + S-adenosyl-L-homocysteine + H(+). In terms of biological role, specifically catalyzes the AdoMet-dependent 2'-O-ribose methylation of cytidine at position 56 in tRNAs. This chain is tRNA (cytidine(56)-2'-O)-methyltransferase, found in Thermoplasma volcanium (strain ATCC 51530 / DSM 4299 / JCM 9571 / NBRC 15438 / GSS1).